The chain runs to 781 residues: Probable beta-D-xylosidase 5 (781 aa).

The first 23 residues, 1 to 23 (MSIRRFVRLSLLIIALVSSLCES), serve as a signal peptide directing secretion. N-linked (GlcNAc...) asparagine glycosylation is found at asparagine 43, asparagine 103, and asparagine 123. Aspartate 291 is a catalytic residue. Asparagine 342, asparagine 424, asparagine 504, asparagine 543, asparagine 601, and asparagine 653 each carry an N-linked (GlcNAc...) asparagine glycan.

The protein belongs to the glycosyl hydrolase 3 family.

The protein resides in the secreted. It localises to the extracellular space. The protein localises to the extracellular matrix. This Arabidopsis thaliana (Mouse-ear cress) protein is Probable beta-D-xylosidase 5 (BXL5).